A 315-amino-acid polypeptide reads, in one-letter code: MSIPEVGKKIRVTVPSTTANLGPGFDCLGAALDLHNEFIFTRIEGGGDRFDLIMESTDGNHLRGGPENLVFRAAQKVWESANMEPFALEARVKLAVPPARGLGSSATAIVAGLIGANAIMNSPLPKEKLLELAIDIEGHPDNVVPSLLGGLCLTARSSSQRWRIIRCDWHDSIKAVVAIPAIRLSTSEARKVMPKNVPISDAVTNMGALTLLLNGLKAGNDELIKEGMFDKLHEPYRWKLIKGGLEVKDAALQAGALGCAISGAGPSILALCKKENGKEVSQAMVKAWEKSGVASRAPFLNLQTTGSQFSTISSR.

Residue 97–107 (PPARGLGSSAT) coordinates ATP.

The protein belongs to the GHMP kinase family. Homoserine kinase subfamily.

Its subcellular location is the cytoplasm. The catalysed reaction is L-homoserine + ATP = O-phospho-L-homoserine + ADP + H(+). It participates in amino-acid biosynthesis; L-threonine biosynthesis; L-threonine from L-aspartate: step 4/5. In terms of biological role, catalyzes the ATP-dependent phosphorylation of L-homoserine to L-homoserine phosphate. The sequence is that of Homoserine kinase from Prochlorococcus marinus (strain MIT 9312).